Here is a 316-residue protein sequence, read N- to C-terminus: ATP synthase gamma chain (316 aa).

This sequence belongs to the ATPase gamma chain family. F-type ATPases have 2 components, CF(1) - the catalytic core - and CF(0) - the membrane proton channel. CF(1) has five subunits: alpha(3), beta(3), gamma(1), delta(1), epsilon(1). CF(0) has three main subunits: a, b and c.

It localises to the cellular thylakoid membrane. In terms of biological role, produces ATP from ADP in the presence of a proton gradient across the membrane. The gamma chain is believed to be important in regulating ATPase activity and the flow of protons through the CF(0) complex. The polypeptide is ATP synthase gamma chain (Parasynechococcus marenigrum (strain WH8102)).